The chain runs to 266 residues: Small ribosomal subunit protein uS3 (266 aa).

A KH type-2 domain is found at 39-107; the sequence is VREYLKKKLK…PVHVNIEEIR (69 aa). The disordered stretch occupies residues 214-266; it reads PVVEEVTEDKRPRRNARPGDRRPRRDGEGGAPGARRGGPRRGAGKPEDGKTGE. 2 stretches are compositionally biased toward basic and acidic residues: residues 230–241 and 257–266; these read RPGDRRPRRDGE and GKPEDGKTGE.

This sequence belongs to the universal ribosomal protein uS3 family. As to quaternary structure, part of the 30S ribosomal subunit. Forms a tight complex with proteins S10 and S14.

Binds the lower part of the 30S subunit head. Binds mRNA in the 70S ribosome, positioning it for translation. The polypeptide is Small ribosomal subunit protein uS3 (Burkholderia thailandensis (strain ATCC 700388 / DSM 13276 / CCUG 48851 / CIP 106301 / E264)).